Here is a 117-residue protein sequence, read N- to C-terminus: Nuclear transition protein 2 (117 aa).

A disordered region spans residues 1-117 (MDTKMQSLPT…KRRSSGRRYK (117 aa)). Over residues 7–26 (SLPTTHPHPHSSSRPQSHTS) the composition is skewed to low complexity. Zn(2+)-binding residues include histidine 12, histidine 14, histidine 16, histidine 24, cysteine 32, cysteine 34, cysteine 38, and cysteine 41. A compositionally biased stretch (low complexity) spans 44–53 (AGHAGSSSSP). 2 stretches are compositionally biased toward basic residues: residues 60–77 (KHPK…RPSH) and 93–117 (SKRK…RRYK). A Nuclear localization signal motif is present at residues 90–98 (GKVSKRKAV). Residue serine 112 is modified to Phosphoserine.

This sequence belongs to the nuclear transition protein 2 family.

It is found in the nucleus. Its subcellular location is the chromosome. In terms of biological role, plays a key role in the replacement of histones to protamine in the elongating spermatids of mammals. In condensing spermatids, loaded onto the nucleosomes, where it promotes the recruitment and processing of protamines, which are responsible for histone eviction. The histone H2AB1-H2BC1/TH2B dimer is required for loading of TNP2 onto chromatin. The polypeptide is Nuclear transition protein 2 (Mus musculus (Mouse)).